Consider the following 1083-residue polypeptide: DNA-directed RNA polymerase subunit beta (1083 aa).

This sequence belongs to the RNA polymerase beta chain family. In terms of assembly, in plastids the minimal PEP RNA polymerase catalytic core is composed of four subunits: alpha, beta, beta', and beta''. When a (nuclear-encoded) sigma factor is associated with the core the holoenzyme is formed, which can initiate transcription.

It is found in the plastid. The protein resides in the chloroplast. It carries out the reaction RNA(n) + a ribonucleoside 5'-triphosphate = RNA(n+1) + diphosphate. In terms of biological role, DNA-dependent RNA polymerase catalyzes the transcription of DNA into RNA using the four ribonucleoside triphosphates as substrates. In Acorus calamus var. americanus (American sweet flag), this protein is DNA-directed RNA polymerase subunit beta.